We begin with the raw amino-acid sequence, 107 residues long: Replication initiation control protein YabA (107 aa).

4 residues coordinate Zn(2+): H81, C83, C97, and C100.

It belongs to the YabA family. As to quaternary structure, homotetramer. Interacts with both DnaA and DnaN, acting as a bridge between these two proteins. It depends on Zn(2+) as a cofactor.

Its subcellular location is the cytoplasm. It localises to the nucleoid. In terms of biological role, involved in control of chromosome replication initiation. Inhibits the cooperative binding of DnaA to the oriC region, thus negatively regulating initiation of chromosome replication. Inhibits the ability of DnaA-ATP to form a helix on DNA; does not disassemble preformed DnaA-DNA helices. Decreases the residence time of DnaA on the chromosome at its binding sites (oriC, replication forks and promoter-binding sites). Tethers DnaA to the replication machinery via the DNA polymerase beta sliding clamp subunit (dnaN). Associates with oriC and other DnaA targets on the chromosome in a DnaA-dependent manner. This Streptococcus pyogenes serotype M1 protein is Replication initiation control protein YabA.